A 347-amino-acid polypeptide reads, in one-letter code: Selenide, water dikinase (347 aa).

Cys-17 is an active-site residue. ATP-binding positions include Lys-20 and 48–50 (TRD). Asp-51 contacts Mg(2+). Residues Asp-68, Asp-91, and 139–141 (GHS) each bind ATP. Position 91 (Asp-91) interacts with Mg(2+). A Mg(2+)-binding site is contributed by Asp-227.

The protein belongs to the selenophosphate synthase 1 family. Class I subfamily. In terms of assembly, homodimer. Mg(2+) serves as cofactor.

It carries out the reaction hydrogenselenide + ATP + H2O = selenophosphate + AMP + phosphate + 2 H(+). Synthesizes selenophosphate from selenide and ATP. In Escherichia coli O139:H28 (strain E24377A / ETEC), this protein is Selenide, water dikinase.